The chain runs to 1176 residues: Surface-layer 125 kDa protein (1176 aa).

Positions 1–30 (MAKQNKGRKFFAASATAALVASAIVPVASA) are cleaved as a signal peptide. SLH domains are found at residues 31–88 (AQLN…LEAE), 89–152 (GDVN…DLSE), and 153–216 (FADA…PKVD).

Its subcellular location is the secreted. It is found in the cell wall. The protein localises to the S-layer. The S-layer is a paracrystalline mono-layered assembly of proteins which coat the surface of bacteria. This chain is Surface-layer 125 kDa protein, found in Lysinibacillus sphaericus (Bacillus sphaericus).